The following is a 354-amino-acid chain: Protein ECM8 (354 aa).

May be involved in cell wall organization and biogenesis. In Saccharomyces cerevisiae (strain ATCC 204508 / S288c) (Baker's yeast), this protein is Protein ECM8 (ECM8).